We begin with the raw amino-acid sequence, 880 residues long: Alanine--tRNA ligase (880 aa).

4 residues coordinate Zn(2+): His-566, His-570, Cys-668, and His-672.

Belongs to the class-II aminoacyl-tRNA synthetase family. Zn(2+) serves as cofactor.

Its subcellular location is the cytoplasm. The catalysed reaction is tRNA(Ala) + L-alanine + ATP = L-alanyl-tRNA(Ala) + AMP + diphosphate. Functionally, catalyzes the attachment of alanine to tRNA(Ala) in a two-step reaction: alanine is first activated by ATP to form Ala-AMP and then transferred to the acceptor end of tRNA(Ala). Also edits incorrectly charged Ser-tRNA(Ala) and Gly-tRNA(Ala) via its editing domain. This Nostoc sp. (strain PCC 7120 / SAG 25.82 / UTEX 2576) protein is Alanine--tRNA ligase.